We begin with the raw amino-acid sequence, 256 residues long: Exosome complex component RRP41-like (256 aa).

This sequence belongs to the RNase PH family. In terms of assembly, probable component of the RNA exosome complex. In terms of tissue distribution, highly expressed in imbibed seeds and young seedlings.

The protein resides in the cytoplasm. The protein localises to the nucleus. In terms of biological role, non-catalytic component of the RNA exosome complex which has 3'-&gt;5' exoribonuclease activity and participates in a multitude of cellular RNA processing, maturation and degradation events. In vitro, is a processive phosphorolytic exonuclease and requires a single-stranded poly(A) tail on the substrate RNA for its activity. Plays an important role in seed germination and early seedling growth by mediating specific cytoplasmic mRNA decay of transcripts coding for the abscisic acid (ABA) biosynthetic enzymes NCED5 and NCED6, and the ABA signaling transcription factors ABI3 and ABI4. This Arabidopsis thaliana (Mouse-ear cress) protein is Exosome complex component RRP41-like.